The chain runs to 676 residues: WD repeat-containing protein 48 (676 aa).

At Tyr28 the chain carries Phosphotyrosine. WD repeat units lie at residues 28–67, 73–112, 115–154, 166–205, 208–247, 250–289, 292–334, and 358–397; these read YNRN…QDPY, HHTD…CMST, THKD…ALTA, GNKD…KLMK, GHTD…CIAT, VHDE…IRVL, EEKA…NFRA, and KGGA…KVED. Residue Lys214 is modified to N6-acetyllysine. Position 578 is an N6-acetyllysine (Lys578). The interval 607 to 628 is disordered; the sequence is LDNESQTTSSSNNEKPEQEKEE. The segment covering 609-619 has biased composition (low complexity); it reads NESQTTSSSNN. Thr613 carries the phosphothreonine modification.

The protein belongs to the WD repeat WDR48 family. As to quaternary structure, interacts with USP46. Interacts with USP1. Interacts with USP12. Component of the USP12-WDR20-WDR48 deubiquitinating complex. Component of the USP12-DMWD-WDR48 deubiquitinating complex. Interacts with PHLPP1. Interacts with RAD51AP1; the interaction is direct and promotes formation of a trimeric complex with RAD51 via RAD51AP1. Interacts with ATAD5; the interaction regulates USP1-mediated PCNA deubiquitination. Interacts with RAD51; the interaction is enhanced under replication stress. Interacts with ITCH; the interaction is more efficient when both USP12 and WDR48/UAF1 are involved and may facilitate recruitment of the USP12 deubiquitinating complex to Notch.

Its subcellular location is the nucleus. It localises to the cytoplasm. The protein resides in the lysosome. The protein localises to the late endosome. Its function is as follows. Regulator of deubiquitinating complexes, which acts as a strong activator of USP1, USP12 and USP46. Enhances the USP1-mediated deubiquitination of FANCD2; USP1 being almost inactive by itself. Activates deubiquitination by increasing the catalytic turnover without increasing the affinity of deubiquitinating enzymes for the substrate. Also activates deubiquitinating activity of complexes containing USP12. Docks at the distal end of the USP12 fingers domain and induces a cascade of structural changes leading to the activation of the enzyme. Together with RAD51AP1, promotes DNA repair by stimulating RAD51-mediated homologous recombination. Binds single-stranded DNA (ssDNA) and double-stranded DNA (dsDNA). DNA-binding is required both for USP1-mediated deubiquitination of FANCD2 and stimulation of RAD51-mediated homologous recombination: both WDR48/UAF1 and RAD51AP1 have coordinated role in DNA-binding during these processes. Together with ATAD5 and by regulating USP1 activity, has a role in PCNA-mediated translesion synthesis (TLS) by deubiquitinating monoubiquitinated PCNA. Together with ATAD5, has a role in recruiting RAD51 to stalled forks during replication stress. This Mus musculus (Mouse) protein is WD repeat-containing protein 48 (Wdr48).